A 549-amino-acid polypeptide reads, in one-letter code: MKRVLTALAAALPFAAHAADAISGAVERQPTNWQAIIMFLIFVVFTLGITYWASKRVRSRSDYYTAGGNITGFQNGLAIAGDYMSAASFLGISALVFTSGYDGLIYSLGFLVGWPIILFLIAERLRNLGRYTFADVASYRLKQGPIRILSACGSLVVVALYLIAQMVGAGKLIELLFGLNYHIAVVLVGVLMMMYVLFGGMLATTWVQIIKAVLLLFGASFMAFMVMKHVGFSFNNLFTEAMAVHPKGTAIMSPGGLVQDPISALSLGLGLMFGTAGLPHILMRFFTVSDAREARKSVFYATGFMGYFYILTFIIGFGAIMLVGANPAYKDAAGALIGGNNMAAVHLANAVGGNLFLGFISAVAFATILAVVAGLTLAGASAVSHDLYANVFRKGATEREELKVSKITVLVLGVIAIILGFLFENQNIAFMVGLAFAIAASCNFPIILLSMYWSKLTTRGAMLGGWLGLLTAVVLMILGPTIWVQILGHEKAIFPYEYPALFSISVAFLGIWFFSATDNSAEGNREREQFRAQFIRSQTGFGVQQGRAH.

The next 13 helical transmembrane spans lie at 33–53 (WQAI…TYWA), 77–97 (LAIA…ALVF), 103–123 (GLIY…LIAE), 148–168 (ILSA…QMVG), 183–203 (IAVV…GMLA), 206–226 (WVQI…AFMV), 262–282 (ISAL…PHIL), 303–323 (GFMG…IMLV), 355–375 (LFLG…VAGL), 404–424 (VSKI…FLFE), 428–448 (IAFM…PIIL), 464–484 (GGWL…TIWV), and 493–513 (IFPY…GIWF).

The protein belongs to the sodium:solute symporter (SSF) (TC 2.A.21) family.

The protein resides in the cell inner membrane. Functionally, transports acetate. The sequence is that of Cation/acetate symporter ActP from Salmonella paratyphi C (strain RKS4594).